The sequence spans 364 residues: Putative serine/threonine-protein phosphatase C06A1.3 (364 aa).

Positions 1–24 (MSTDGNNNKKGSKEGPKSSEISKF) are disordered. Residues 11–24 (GSKEGPKSSEISKF) are compositionally biased toward basic and acidic residues. The Mn(2+) site is built by Asp-93, His-95, Asp-121, and Asn-153. His-154 (proton donor) is an active-site residue. The Mn(2+) site is built by His-202 and His-277.

It belongs to the PPP phosphatase family. PP-1 subfamily. Mn(2+) serves as cofactor.

The enzyme catalyses O-phospho-L-seryl-[protein] + H2O = L-seryl-[protein] + phosphate. The catalysed reaction is O-phospho-L-threonyl-[protein] + H2O = L-threonyl-[protein] + phosphate. The polypeptide is Putative serine/threonine-protein phosphatase C06A1.3 (Caenorhabditis elegans).